Here is a 659-residue protein sequence, read N- to C-terminus: Putative oxidoreductase AegA (659 aa).

4Fe-4S ferredoxin-type domains follow at residues 3–22 (RFIM…EIAC), 47–77 (HQQQ…SHVD), 78–107 (DSIQ…IVLT), 114–147 (VKAT…LVTD), and 218–252 (DQAQ…WIEL). The [4Fe-4S] cluster site is built by C12, C15, C18, C22, C56, C59, C64, C68, C87, C90, C93, C97, C121, C124, C133, C137, C227, C230, C236, and C240.

[4Fe-4S] cluster is required as a cofactor.

Functionally, involved in formate-dependent uric acid degradation under microaerobic and anaerobic conditions. May reduce the enzymes necessary for uric acid degradation. The protein is Putative oxidoreductase AegA of Escherichia coli (strain K12).